Here is a 341-residue protein sequence, read N- to C-terminus: Malate dehydrogenase, mitochondrial (341 aa).

Residues 35 to 41 and Asp61 contribute to the NAD(+) site; that span reads GAGGGIG. Positions 109 and 115 each coordinate substrate. Asn122 is an NAD(+) binding site. Positions 147 and 181 each coordinate substrate. The active-site Proton acceptor is His205. Met254 is a binding site for NAD(+).

It belongs to the LDH/MDH superfamily. MDH type 1 family. As to quaternary structure, homodimer.

It is found in the mitochondrion matrix. It carries out the reaction (S)-malate + NAD(+) = oxaloacetate + NADH + H(+). The polypeptide is Malate dehydrogenase, mitochondrial (MDH1) (Schizosaccharomyces pombe (strain 972 / ATCC 24843) (Fission yeast)).